Reading from the N-terminus, the 429-residue chain is 3-phosphoshikimate 1-carboxyvinyltransferase (429 aa).

3-phosphoshikimate-binding residues include Lys20, Ser21, and Arg25. A phosphoenolpyruvate-binding site is contributed by Lys20. Phosphoenolpyruvate contacts are provided by Gly89 and Arg118. 6 residues coordinate 3-phosphoshikimate: Ser164, Ser165, Gln166, Ser192, Asp311, and Lys338. Gln166 lines the phosphoenolpyruvate pocket. Asp311 (proton acceptor) is an active-site residue. Phosphoenolpyruvate-binding residues include Arg342 and Arg384.

It belongs to the EPSP synthase family. Monomer.

The protein resides in the cytoplasm. The enzyme catalyses 3-phosphoshikimate + phosphoenolpyruvate = 5-O-(1-carboxyvinyl)-3-phosphoshikimate + phosphate. The protein operates within metabolic intermediate biosynthesis; chorismate biosynthesis. In terms of biological role, catalyzes the transfer of the enolpyruvyl moiety of phosphoenolpyruvate (PEP) to the 5-hydroxyl of shikimate-3-phosphate (S3P) to produce enolpyruvyl shikimate-3-phosphate and inorganic phosphate. The polypeptide is 3-phosphoshikimate 1-carboxyvinyltransferase (Methanococcus vannielii (strain ATCC 35089 / DSM 1224 / JCM 13029 / OCM 148 / SB)).